A 194-amino-acid chain; its full sequence is Probable calcium-binding protein CML45 (194 aa).

Positions 52-63 (NNKDQQETLTKQ) are enriched in basic and acidic residues. The segment at 52–81 (NNKDQQETLTKQEDDDDDDDDDDDDDDDDI) is disordered. Acidic residues predominate over residues 64–81 (EDDDDDDDDDDDDDDDDI). EF-hand domains follow at residues 76-98 (DDDDDIDISREEAEMVMRSLGLF), 122-157 (ASLEEVKQAFDVFDENKDGFIDAIELQRVLTILGFK), and 160-194 (SYLDNCLVMIRSLDGNKDGKIDFNEFVKFMETSFY). Residues Asp-135, Asn-137, Asp-139, Glu-146, Asp-173, Asn-175, Asp-177, Lys-179, and Glu-184 each coordinate Ca(2+).

In terms of biological role, potential calcium sensor. The protein is Probable calcium-binding protein CML45 of Arabidopsis thaliana (Mouse-ear cress).